The sequence spans 280 residues: Dexamethasone-induced Ras-related protein 1 (280 aa).

At Cys11 the chain carries S-nitrosocysteine. GTP is bound at residue 31–38; it reads GSSKVGKT. An Effector region motif is present at residues 53-61; the sequence is YTPTIEDFH. Residues 78–82 and 145–148 each bind GTP; these read DTSGN and NKGD. Residue Cys277 is modified to Cysteine methyl ester. A lipid anchor (S-farnesyl cysteine) is attached at Cys277. The propeptide at 278-280 is removed in mature form; it reads VIS.

The protein belongs to the small GTPase superfamily. RasD family. In terms of assembly, forms a ternary complex with CAPON and NOS1. Component of a complex, at least composed of APBB1, RASD1/DEXRAS1 and APP. Interacts with APBB1/FE65. Forms. In terms of processing, S-nitrosylation stimulates guanine-nucleotide exchange activity. Prominently found in brain at both mRNA and protein levels. Moderate expression in testis and lung. Slightly expressed in heart, spleen, skeletal muscle, liver and kidney.

The protein localises to the cell membrane. The protein resides in the cytoplasm. It localises to the perinuclear region. Its subcellular location is the nucleus. In terms of biological role, small GTPase. Negatively regulates the transcription regulation activity of the APBB1/FE65-APP complex via its interaction with APBB1/FE65. This Rattus norvegicus (Rat) protein is Dexamethasone-induced Ras-related protein 1 (Rasd1).